The sequence spans 302 residues: Sulfate adenylyltransferase subunit 2 (302 aa).

This sequence belongs to the PAPS reductase family. CysD subfamily. As to quaternary structure, heterodimer composed of CysD, the smaller subunit, and CysN.

It catalyses the reaction sulfate + ATP + H(+) = adenosine 5'-phosphosulfate + diphosphate. It participates in sulfur metabolism; hydrogen sulfide biosynthesis; sulfite from sulfate: step 1/3. In terms of biological role, with CysN forms the ATP sulfurylase (ATPS) that catalyzes the adenylation of sulfate producing adenosine 5'-phosphosulfate (APS) and diphosphate, the first enzymatic step in sulfur assimilation pathway. APS synthesis involves the formation of a high-energy phosphoric-sulfuric acid anhydride bond driven by GTP hydrolysis by CysN coupled to ATP hydrolysis by CysD. The protein is Sulfate adenylyltransferase subunit 2 of Xanthomonas axonopodis pv. citri (strain 306).